The primary structure comprises 250 residues: 3-deoxy-manno-octulosonate cytidylyltransferase (250 aa).

Belongs to the KdsB family.

It localises to the cytoplasm. It carries out the reaction 3-deoxy-alpha-D-manno-oct-2-ulosonate + CTP = CMP-3-deoxy-beta-D-manno-octulosonate + diphosphate. Its pathway is nucleotide-sugar biosynthesis; CMP-3-deoxy-D-manno-octulosonate biosynthesis; CMP-3-deoxy-D-manno-octulosonate from 3-deoxy-D-manno-octulosonate and CTP: step 1/1. It participates in bacterial outer membrane biogenesis; lipopolysaccharide biosynthesis. Activates KDO (a required 8-carbon sugar) for incorporation into bacterial lipopolysaccharide in Gram-negative bacteria. The polypeptide is 3-deoxy-manno-octulosonate cytidylyltransferase (Syntrophobacter fumaroxidans (strain DSM 10017 / MPOB)).